The chain runs to 150 residues: Large ribosomal subunit protein bL9 (150 aa).

Belongs to the bacterial ribosomal protein bL9 family.

In terms of biological role, binds to the 23S rRNA. The polypeptide is Large ribosomal subunit protein bL9 (Baumannia cicadellinicola subsp. Homalodisca coagulata).